The chain runs to 121 residues: Basic phospholipase A2 daboxin P (121 aa).

7 disulfides stabilise this stretch: Cys-26–Cys-115, Cys-28–Cys-44, Cys-43–Cys-95, Cys-49–Cys-121, Cys-50–Cys-88, Cys-57–Cys-81, and Cys-75–Cys-86. Ca(2+) contacts are provided by Tyr-27, Gly-29, and Gly-31. His-47 is a catalytic residue. Asp-48 contacts Ca(2+). The active site involves Asp-89.

Ca(2+) serves as cofactor. In terms of tissue distribution, expressed by the venom gland.

Its subcellular location is the secreted. It carries out the reaction a 1,2-diacyl-sn-glycero-3-phosphocholine + H2O = a 1-acyl-sn-glycero-3-phosphocholine + a fatty acid + H(+). Snake venom phospholipase A2 (PLA2) that exhibits anticoagulant activity, probably by binding to factor X and its activated form factor Xa (F10). Shows no cytotoxicity. PLA2 catalyzes the calcium-dependent hydrolysis of the 2-acyl groups in 3-sn-phosphoglycerides. This is Basic phospholipase A2 daboxin P from Daboia russelii (Russel's viper).